The following is a 901-amino-acid chain: Probable inorganic carbon transporter subunit DabA (901 aa).

Zn(2+) contacts are provided by cysteine 424, aspartate 426, histidine 606, and cysteine 621.

Belongs to the inorganic carbon transporter (TC 9.A.2) DabA family. Forms a complex with DabB. Zn(2+) serves as cofactor.

Its subcellular location is the cell membrane. Its function is as follows. Part of an energy-coupled inorganic carbon pump. This Staphylococcus aureus (strain NCTC 8325 / PS 47) protein is Probable inorganic carbon transporter subunit DabA.